Consider the following 499-residue polypeptide: Glycerol kinase (499 aa).

Residue Thr-17 participates in ADP binding. Residues Thr-17, Thr-18, and Ser-19 each coordinate ATP. A sn-glycerol 3-phosphate-binding site is contributed by Thr-17. Arg-21 provides a ligand contact to ADP. Sn-glycerol 3-phosphate contacts are provided by Arg-87, Glu-88, Tyr-139, and Asp-243. Glycerol contacts are provided by Arg-87, Glu-88, Tyr-139, Asp-243, and Gln-244. Positions 265 and 308 each coordinate ADP. Residues Thr-265, Gly-308, Gln-312, and Gly-409 each coordinate ATP. Gly-409 and Asn-413 together coordinate ADP.

The protein belongs to the FGGY kinase family.

It carries out the reaction glycerol + ATP = sn-glycerol 3-phosphate + ADP + H(+). The protein operates within polyol metabolism; glycerol degradation via glycerol kinase pathway; sn-glycerol 3-phosphate from glycerol: step 1/1. Its activity is regulated as follows. Inhibited by fructose 1,6-bisphosphate (FBP). Its function is as follows. Key enzyme in the regulation of glycerol uptake and metabolism. Catalyzes the phosphorylation of glycerol to yield sn-glycerol 3-phosphate. The chain is Glycerol kinase from Pseudomonas entomophila (strain L48).